We begin with the raw amino-acid sequence, 289 residues long: Rhodopsin (289 aa).

The Extracellular portion of the chain corresponds to 1–7 (YLVNPAA). The helical transmembrane segment at 8–32 (YAALGAYMFLLILIGFPVNFLTLYV) threads the bilayer. Topologically, residues 33 to 44 (TIEHKKLRTPLN) are cytoplasmic. Residues 45-67 (YILLNLAVANLFMVLGGFTTTMY) traverse the membrane as a helical segment. At 68 to 81 (TSMHGYFVLGRLGC) the chain is on the extracellular side. Residues C81 and C158 are joined by a disulfide bond. Residues 82–104 (NLEGFFATMGGEIALWSLVVLAI) form a helical membrane-spanning segment. The short motif at 105–107 (ERW) is the 'Ionic lock' involved in activated form stabilization element. Residues 105–123 (ERWIVVCKPISNFRFTEDH) are Cytoplasmic-facing. The helical transmembrane segment at 124-144 (AIMGLAFTWVMALSCAVPPLV) threads the bilayer. The Extracellular portion of the chain corresponds to 145–173 (GWSRYIPEGMQCSCGVDYYTRAEGFNNES). A glycan (N-linked (GlcNAc...) asparagine) is linked at N171. A helical membrane pass occupies residues 174-195 (FVIYMFIVHFLTPLIIISFCYG). Over 196–223 (RLLCAVKEAAAAQQESETTQRAEREVSR) the chain is Cytoplasmic. A helical transmembrane segment spans residues 224 to 245 (MVVMMVISFLMCWLPYASVAWY). At 246–257 (IFCNQGSEFGPI) the chain is on the extracellular side. A helical transmembrane segment spans residues 258–279 (FMTLPAFFAKSSAIYNPLIYIC). K267 carries the post-translational modification N6-(retinylidene)lysine. The Cytoplasmic portion of the chain corresponds to 280–289 (MNKQFRHCMI).

This sequence belongs to the G-protein coupled receptor 1 family. Opsin subfamily. Post-translationally, phosphorylated on some or all of the serine and threonine residues present in the C-terminal region. Contains one covalently linked retinal chromophore.

It is found in the membrane. The protein localises to the cell projection. The protein resides in the cilium. Its subcellular location is the photoreceptor outer segment. Its function is as follows. Photoreceptor required for image-forming vision at low light intensity. While most salt water fish species use retinal as chromophore, most freshwater fish use 3-dehydroretinal, or a mixture of retinal and 3-dehydroretinal. Light-induced isomerization of 11-cis to all-trans retinal triggers a conformational change that activates signaling via G-proteins. Subsequent receptor phosphorylation mediates displacement of the bound G-protein alpha subunit by arrestin and terminates signaling. This chain is Rhodopsin (rho), found in Cottocomephorus inermis (Longfin Baikal sculpin).